The chain runs to 328 residues: D-cysteine desulfhydrase (328 aa).

Residue Lys51 is modified to N6-(pyridoxal phosphate)lysine.

The protein belongs to the ACC deaminase/D-cysteine desulfhydrase family. Homodimer. Requires pyridoxal 5'-phosphate as cofactor.

It catalyses the reaction D-cysteine + H2O = hydrogen sulfide + pyruvate + NH4(+) + H(+). Functionally, catalyzes the alpha,beta-elimination reaction of D-cysteine and of several D-cysteine derivatives. It could be a defense mechanism against D-cysteine. This chain is D-cysteine desulfhydrase, found in Salmonella choleraesuis (strain SC-B67).